Reading from the N-terminus, the 130-residue chain is Ribosome-binding factor A (130 aa).

This sequence belongs to the RbfA family. In terms of assembly, monomer. Binds 30S ribosomal subunits, but not 50S ribosomal subunits or 70S ribosomes.

The protein resides in the cytoplasm. In terms of biological role, one of several proteins that assist in the late maturation steps of the functional core of the 30S ribosomal subunit. Associates with free 30S ribosomal subunits (but not with 30S subunits that are part of 70S ribosomes or polysomes). Required for efficient processing of 16S rRNA. May interact with the 5'-terminal helix region of 16S rRNA. This Roseiflexus castenholzii (strain DSM 13941 / HLO8) protein is Ribosome-binding factor A.